Consider the following 174-residue polypeptide: Gamma-crystallin D (174 aa).

Beta/gamma crystallin 'Greek key' domains follow at residues 2–40 (GKIT…RVDS) and 41–83 (GCWM…RLIP). Residues 84 to 87 (HAGS) are connecting peptide. Beta/gamma crystallin 'Greek key' domains lie at 88 to 128 (HRIR…NVLE) and 129 to 171 (GCWV…RRVM).

The protein belongs to the beta/gamma-crystallin family. In terms of tissue distribution, detected in the superior olivary complex and fibers of the ventral aoustic stria of the auditory hindbrain.

Crystallins are the dominant structural components of the vertebrate eye lens. The protein is Gamma-crystallin D (Crygd) of Rattus norvegicus (Rat).